The chain runs to 557 residues: 2,3-bisphosphoglycerate-independent phosphoglycerate mutase 1 (557 aa).

Mn(2+) is bound by residues Asp27 and Ser80. Catalysis depends on Ser80, which acts as the Phosphoserine intermediate. Residues His139, 169-170, Arg205, Arg212, 285-288, and Lys360 contribute to the substrate site; these read RD and RADR. Residues Asp429, His433, Asp470, His471, and His500 each coordinate Mn(2+).

This sequence belongs to the BPG-independent phosphoglycerate mutase family. As to quaternary structure, monomer. Mn(2+) serves as cofactor.

The protein localises to the cytoplasm. The enzyme catalyses (2R)-2-phosphoglycerate = (2R)-3-phosphoglycerate. It participates in carbohydrate degradation; glycolysis; pyruvate from D-glyceraldehyde 3-phosphate: step 3/5. Catalyzes the interconversion of 2-phosphoglycerate (2-PGA) and 3-phosphoglycerate (3-PGA). Required for guard cell function (e.g. blue light-, abscisic acid- (ABA), and low CO(2)-regulated stomatal movements) and fertility (e.g. pollen grains production). This Arabidopsis thaliana (Mouse-ear cress) protein is 2,3-bisphosphoglycerate-independent phosphoglycerate mutase 1 (PGM1).